The following is a 257-amino-acid chain: Probable oxidoreductase yanE (257 aa).

Belongs to the oxidoreductase OpS7 family.

Its pathway is secondary metabolite biosynthesis; terpenoid biosynthesis. In terms of biological role, part of the gene cluster that mediates the biosynthesis of yanuthone D, a fungal isoprenoid epoxycyclohexenone that acts as an antibiotic against fungi and bacteria. The first step of the pathway is the synthesis of 6-methylsalicylic acid (6-MSA) by the polyketide synthase yanA. 6-MSA is then converted to m-cresol by the decarboxylase yanB. The cytochrome P450 monooxygenase yanC then catalyzes the oxidation of m-cresol to toluquinol. Epoxidation of toluquinol is then performed by the short chain dehydrogenase yanD, with the help of yanE, and a further prenylation by yanG leads to 7-deacetoxyyanuthone A. The next step is the hydroxylation of C-22 of 7-deacetoxyyanuthone A by the cytochrome P450 monooxygenase yanH to yield 22-deacetylyanuthone A. O-Mevalon transferase yanI then attaches mevalon to the hydroxyl group of 22-deacetylyanuthone A to produce yanuthone E. Finally, the FAD-dependent monooxygenase yanF oxidizes the hydroxyl group at C15 of yanuthone E to form yanuthone D. Furthermore, several branching points in the pathway lead to the production of yanuthones F and G from 7-deacetoxyyanuthone A; yanuthones H and I from 22-deacetylyanuthone A; and yanuthone J from yanuthone E. YanE is also involved in the synthesis of yanuthone X1 which does not have 6-methylsalicylic acid (6-MSA) as precursor. This is Probable oxidoreductase yanE from Aspergillus niger (strain ATCC 1015 / CBS 113.46 / FGSC A1144 / LSHB Ac4 / NCTC 3858a / NRRL 328 / USDA 3528.7).